The primary structure comprises 91 residues: MPLHKSAEKRLRQSARRNERNRARKKELKVLLKNVQKLIDTNADQGEVEAAYRSAVQKLDRLGVKRYIHPNKASRKKSQLSRMLNAYAQKD.

Positions 1-21 (MPLHKSAEKRLRQSARRNERN) are enriched in basic and acidic residues. 2 disordered regions span residues 1-25 (MPLHKSAEKRLRQSARRNERNRARK) and 71-91 (NKASRKKSQLSRMLNAYAQKD).

Belongs to the bacterial ribosomal protein bS20 family.

Functionally, binds directly to 16S ribosomal RNA. The polypeptide is Small ribosomal subunit protein bS20 (Prosthecochloris aestuarii (strain DSM 271 / SK 413)).